We begin with the raw amino-acid sequence, 240 residues long: Ubiquinone biosynthesis O-methyltransferase (240 aa).

S-adenosyl-L-methionine is bound by residues Arg44, Gly64, Asp85, and Met129.

It belongs to the methyltransferase superfamily. UbiG/COQ3 family.

The enzyme catalyses a 3-demethylubiquinol + S-adenosyl-L-methionine = a ubiquinol + S-adenosyl-L-homocysteine + H(+). It catalyses the reaction a 3-(all-trans-polyprenyl)benzene-1,2-diol + S-adenosyl-L-methionine = a 2-methoxy-6-(all-trans-polyprenyl)phenol + S-adenosyl-L-homocysteine + H(+). It functions in the pathway cofactor biosynthesis; ubiquinone biosynthesis. O-methyltransferase that catalyzes the 2 O-methylation steps in the ubiquinone biosynthetic pathway. This Shigella flexneri serotype 5b (strain 8401) protein is Ubiquinone biosynthesis O-methyltransferase.